The primary structure comprises 375 residues: Chaperone protein DnaJ (375 aa).

A J domain is found at 5–69 (DYYEILGVSK…QKRAAYDQYG (65 aa)). The segment at 130 to 208 (GVTKEIRIPT…CHGHGRVEKA (79 aa)) adopts a CR-type zinc-finger fold. Zn(2+) contacts are provided by Cys-143, Cys-146, Cys-160, Cys-163, Cys-182, Cys-185, Cys-196, and Cys-199. CXXCXGXG motif repeat units follow at residues 143–150 (CGVCHGSG), 160–167 (CPTCHGQG), 182–189 (CPHCHGRG), and 196–203 (CNSCHGHG).

It belongs to the DnaJ family. In terms of assembly, homodimer. Zn(2+) is required as a cofactor.

Its subcellular location is the cytoplasm. In terms of biological role, participates actively in the response to hyperosmotic and heat shock by preventing the aggregation of stress-denatured proteins and by disaggregating proteins, also in an autonomous, DnaK-independent fashion. Unfolded proteins bind initially to DnaJ; upon interaction with the DnaJ-bound protein, DnaK hydrolyzes its bound ATP, resulting in the formation of a stable complex. GrpE releases ADP from DnaK; ATP binding to DnaK triggers the release of the substrate protein, thus completing the reaction cycle. Several rounds of ATP-dependent interactions between DnaJ, DnaK and GrpE are required for fully efficient folding. Also involved, together with DnaK and GrpE, in the DNA replication of plasmids through activation of initiation proteins. The chain is Chaperone protein DnaJ from Serratia proteamaculans (strain 568).